We begin with the raw amino-acid sequence, 222 residues long: Phosphoenolpyruvate guanylyltransferase (222 aa).

Phosphoenolpyruvate contacts are provided by T147, G163, and S166.

This sequence belongs to the CofC family.

It carries out the reaction phosphoenolpyruvate + GTP + H(+) = enolpyruvoyl-2-diphospho-5'-guanosine + diphosphate. Its pathway is cofactor biosynthesis; coenzyme F420 biosynthesis. Functionally, guanylyltransferase that catalyzes the activation of phosphoenolpyruvate (PEP) as enolpyruvoyl-2-diphospho-5'-guanosine, via the condensation of PEP with GTP. It is involved in the biosynthesis of coenzyme F420, a hydride carrier cofactor. The polypeptide is Phosphoenolpyruvate guanylyltransferase (Streptosporangium roseum (strain ATCC 12428 / DSM 43021 / JCM 3005 / KCTC 9067 / NCIMB 10171 / NRRL 2505 / NI 9100)).